The primary structure comprises 325 residues: Ribosomal RNA small subunit methyltransferase H (325 aa).

The segment at 1-28 (MTASQPLDQADQDSESSSAGSSAAETEH) is disordered. The span at 15–24 (ESSSAGSSAA) shows a compositional bias: low complexity. S-adenosyl-L-methionine is bound by residues 56–58 (GGH), D82, Y110, D131, and Q138. Positions 303–325 (TDEEVQANPRSRSAKLRVAKRVE) are disordered. Basic residues predominate over residues 314 to 325 (RSAKLRVAKRVE).

Belongs to the methyltransferase superfamily. RsmH family.

The protein localises to the cytoplasm. It catalyses the reaction cytidine(1402) in 16S rRNA + S-adenosyl-L-methionine = N(4)-methylcytidine(1402) in 16S rRNA + S-adenosyl-L-homocysteine + H(+). In terms of biological role, specifically methylates the N4 position of cytidine in position 1402 (C1402) of 16S rRNA. This is Ribosomal RNA small subunit methyltransferase H from Rhodopirellula baltica (strain DSM 10527 / NCIMB 13988 / SH1).